We begin with the raw amino-acid sequence, 211 residues long: Ubiquitin-conjugating enzyme E2 S (211 aa).

The region spanning 11 to 157 (HIIRQVYKEV…ARLMTEIHAQ (147 aa)) is the UBC core domain. Catalysis depends on Cys95, which acts as the Glycyl thioester intermediate. The disordered stretch occupies residues 157–211 (QGSSLRGKDPTDPCSSASATLVSGDGPMAKKHAGDRDKKLAAKKKTDKKRALRRL). Positions 197 to 211 (AAKKKTDKKRALRRL) are enriched in basic residues.

The protein belongs to the ubiquitin-conjugating enzyme family.

It carries out the reaction S-ubiquitinyl-[E1 ubiquitin-activating enzyme]-L-cysteine + [E2 ubiquitin-conjugating enzyme]-L-cysteine = [E1 ubiquitin-activating enzyme]-L-cysteine + S-ubiquitinyl-[E2 ubiquitin-conjugating enzyme]-L-cysteine.. It participates in protein modification; protein ubiquitination. In terms of biological role, catalyzes the covalent attachment of ubiquitin to other proteins. Acts as an essential factor of the anaphase promoting complex/cyclosome (APC/C), a cell cycle-regulated ubiquitin ligase that controls progression through mitosis. Acts by specifically elongating 'Lys-11'-linked polyubiquitin chains initiated by the E2 enzyme ube2c/ubch10 on APC/C substrates, enhancing the degradation of APC/C substrates by the proteasome and promoting mitotic exit. This is Ubiquitin-conjugating enzyme E2 S (ube2s) from Xenopus tropicalis (Western clawed frog).